The following is a 57-amino-acid chain: uncharacterized protein (57 aa).

This is an uncharacterized protein from Methanocaldococcus jannaschii (strain ATCC 43067 / DSM 2661 / JAL-1 / JCM 10045 / NBRC 100440) (Methanococcus jannaschii).